Reading from the N-terminus, the 1116-residue chain is MSGLRISDPSKLHLKKELTHIRKVASKGLRDPGTTSSWKSPLTSSRFVVEPPASNNVEILSNNQLDSQFPSSRVFGNNGKEKEKKVFLYNWKTQRTSSEKTEGEDETSWIQASLNDDDDDDDDVSDARNGGDSCLEETRSASMIRKSGFIKKKSKELDLSIGRKSTAKARNFPSHHLHVASGLSVVRDESDETEDFSNSENFPTKVSSPLLLKLKRKNWSRSSSKFLRGTSKREDSSHTCNSTPALSTSSYNMYGIRNPSTVGSWEDGDDELDDDNLDFKGRQGCGIPFYWTKRNLKHRGGCRSCCSPSFSDTLRRKGSSILCGSQSVYRRHRHSSGRFNKQKLALRSAKGVLPLLKYGGDSRGGSSIGIGYSDDDLSTDFGEIDLEAQSRLDGRRWSSCCKSQDGEREEEEEGGSTPESIQSLSQKYKPMFFDELIGQSIVVQSLMNAVKKGRVAHVYLFQGPRGTGKTSTARILSAALNCDVVTEEMKPCGYCKECSDYMLGKSRDLLELDAGKKNGAEKVRYLLKKLLTLAPQSSQRYKVFVIDECHLLPSRTWLSLLKFLENPLQKFVFVCITTDLDNVPRTIQSRCQKYIFNKVRDGDIVVRLRKIASDENLDVESQALDLIALNADGSLRDAETMLEQLSLMGKRITVDLVNELVGVVSDDKLLELLELALSSDTAETVKKARELLDLGADPILMMSQLASLIMDIIAGAYKALDEKYSEAFLDRRNLTEADLERLKHALKLLSEAEKQLRVSTDRSTWFIATLLQLGSMPSPGTTHTGSSRRQSSRATEESISREVIAYKQRSGLQCSNTASPTSIRKSGNLVREVKLSSSSSEVLESDTSMASHDDTTASTMTLTCRNSEKLNDIWIKCVDRCHSKTLKQLLYAHGKLLSISEVEGILVAYIAFGEGEIKARAERFVSSITNSIEMVLRRNVEVRIILLSETELLNSKQTRQIAVTTSSYTESGNEIPMKRIEAIIQEQRLETEWLQKTPGSQGRLKPERNQILPQEDTNGVKVLKICEMGEFQENQSGKRMEHCPVSPSLLHNSNFTNNKDNLGYESESGRGVCSLLFCWNTQKSPRRTKIKGTSMRSRRSRERRFSLFSACARPRK.

Disordered stretches follow at residues 95-138 (RTSS…LEET) and 225-244 (KFLRGTSKREDSSHTCNSTP). Over residues 115–124 (NDDDDDDDDV) the composition is skewed to acidic residues. Short sequence motifs (PEST) lie at residues 257 to 282 (RNPSTVGSWEDGDDELDDDNLDFKGR) and 402 to 422 (KSQDGEREEEEEGGSTPESIQ). Residue 463–470 (GPRGTGKT) participates in ATP binding. Cys482, Cys492, Cys495, and Cys498 together coordinate Zn(2+). Residues 726-760 (EAFLDRRNLTEADLERLKHALKLLSEAEKQLRVST) are a coiled coil. Residues 777-798 (PSPGTTHTGSSRRQSSRATEES) form a disordered region. A compositionally biased stretch (polar residues) spans 778–793 (SPGTTHTGSSRRQSSR).

Belongs to the DnaX/STICHEL family.

The chain is Protein STICHEL-like 1 from Arabidopsis thaliana (Mouse-ear cress).